A 91-amino-acid polypeptide reads, in one-letter code: Soluble cytochrome b558 (91 aa).

The Cytochrome b5 heme-binding domain occupies 8-88 (LPVFTLEQVA…LQRYLIGTLE (81 aa)). Cysteine 25 and cysteine 54 form a disulfide bridge. Residues histidine 43 and histidine 71 each contribute to the heme site.

The chain is Soluble cytochrome b558 from Ectothiorhodospira shaposhnikovii (Ectothiorhodospira vacuolata).